A 303-amino-acid chain; its full sequence is 2-dehydropantoate 2-reductase (303 aa).

NADP(+) contacts are provided by residues Gly7–Gly12, Lys78, Asn103, and Ala129. Lys185 serves as the catalytic Proton donor. Substrate is bound by residues Lys185, Asn189, Asn193, Asn203, and Asn252 to Ser255. Position 267 (Glu267) interacts with NADP(+).

It belongs to the ketopantoate reductase family.

It is found in the cytoplasm. It catalyses the reaction (R)-pantoate + NAD(+) = 2-dehydropantoate + NADH + H(+). The enzyme catalyses (R)-pantoate + NADP(+) = 2-dehydropantoate + NADPH + H(+). Its pathway is cofactor biosynthesis; coenzyme A biosynthesis. Catalyzes the NAD(P)H-dependent reduction of ketopantoate into pantoic acid. This is 2-dehydropantoate 2-reductase from Halobacterium salinarum (strain ATCC 700922 / JCM 11081 / NRC-1) (Halobacterium halobium).